The primary structure comprises 104 residues: Naphthalene 1,2-dioxygenase system, ferredoxin component (104 aa).

Positions 6–101 (IEAVALSDIL…VKIENLRVMI (96 aa)) constitute a Rieske domain. [2Fe-2S] cluster contacts are provided by C45, H47, C64, and H67.

This sequence belongs to the bacterial ring-hydroxylating dioxygenase ferredoxin component family. As to quaternary structure, the naphthalene dioxygenase (NDO) multicomponent enzyme system is composed of an electron transfer component and a dioxygenase component (iron sulfur protein (ISP)). The electron transfer component is composed of a ferredoxin reductase (NdoR) and a ferredoxin (NdoA), and the dioxygenase component is formed of a heterohexamer (trimer of heterodimers) of three large alpha subunits (NdoB) and three small beta subunits (NdoC). [2Fe-2S] cluster is required as a cofactor.

It functions in the pathway aromatic compound metabolism; naphthalene degradation. Functionally, component of the naphthalene dioxygenase (NDO) multicomponent enzyme system which catalyzes the incorporation of both atoms of molecular oxygen into naphthalene to form cis-(1R,2S)-dihydroxy-1,2-dihydronaphthalene. Functions as an intermediate electron transfer protein via a specific interaction with iron sulfur protein components (ISP) (NdoB and NdoC). Also able to catalyze the cis-dihydroxylation of biphenyl and phenanthrene. This Pseudomonas putida (Arthrobacter siderocapsulatus) protein is Naphthalene 1,2-dioxygenase system, ferredoxin component.